Here is a 370-residue protein sequence, read N- to C-terminus: Doublesex- and mab-3-related transcription factor C2 (370 aa).

Residues 1-38 (MDPSETAALHHCSADSSPADEARVPQSTELIPRRPVSR) form a disordered region. The segment at residues 42 to 89 (CARCRNHGVTAHLKGHKRLCLFQACECHKCVLILERRRVMAAQVALRR) is a DNA-binding region (DM). The tract at residues 334–356 (APPGGRGFQPVGPPLRPSPGSSV) is disordered.

Belongs to the DMRT family. As to expression, expressed in testis. Highly expressed in ovary.

The protein localises to the nucleus. In terms of biological role, may be involved in sexual development. In Mus musculus (Mouse), this protein is Doublesex- and mab-3-related transcription factor C2 (Dmrtc2).